The following is a 471-amino-acid chain: 5-hydroxytryptamine receptor 2A (471 aa).

The Extracellular segment spans residues 1–80; the sequence is MEILCEDNIS…LQEKNWSALL (80 aa). Residues N8, N38, N44, N51, and N54 are each glycosylated (N-linked (GlcNAc...) asparagine). Residues 81 to 97 traverse the membrane as a helical segment; sequence TTVVIILTIAGNILVIM. Residues 98-111 are Cytoplasmic-facing; it reads AVSLEKKLQNATNY. Residues 112-137 traverse the membrane as a helical segment; that stretch reads FLMSLAIADMLLGFLVMPVSMLTILY. Residues 138 to 146 are Extracellular-facing; the sequence is GYRWPLPSK. Residues 147–171 form a helical membrane-spanning segment; that stretch reads LCAVWIYLDVLFSTASIMHLCAISL. Residues C148 and C227 are joined by a disulfide bond. Position 155 (D155) interacts with serotonin. The DRY motif; important for ligand-induced conformation changes motif lies at 172-174; the sequence is DRY. Topologically, residues 172–191 are cytoplasmic; it reads DRYVAIQNPIHHSRFNSRTK. A helical membrane pass occupies residues 192 to 215; the sequence is AFLKIIAVWTISVGISMPIPVFGL. Topologically, residues 216-232 are extracellular; it reads QDDSKVFKEGSCLLADD. A helical membrane pass occupies residues 233-258; sequence NFVLIGSFVAFFIPLTIMVITYFLTI. At 259-322 the chain is on the cytoplasmic side; it reads KSLQKEATLC…QSISNEQKAC (64 aa). A Phosphoserine modification is found at S280. Residues 323-348 traverse the membrane as a helical segment; that stretch reads KVLGIVFFLFVVMWCPFFITNIMAVI. Serotonin is bound at residue N343. C349 and C353 are joined by a disulfide. At 349-356 the chain is on the extracellular side; it reads CKESCNEN. A helical transmembrane segment spans residues 357–382; it reads VIGALLNVFVWIGYLSSAVNPLVYTL. Positions 376-380 match the NPxxY motif; important for ligand-induced conformation changes and signaling motif; sequence NPLVY. Over 383-471 the chain is Cytoplasmic; the sequence is FNKTYRSAFS…ETVNEKVSCV (89 aa). The short motif at 469-471 is the PDZ-binding element; it reads SCV.

The protein belongs to the G-protein coupled receptor 1 family. As to quaternary structure, interacts (via C-terminus) with MPDZ and PATJ. May interact (via C-terminus) with MPP3, PRDX6, DLG4, DLG1, CASK, APBA1 and MAGI2. Interacts with GRM2 and DRD2; this may affect signaling. Detected in neurons in brain cortex. Detected in adult intestine, especially in mucosal epithelium, longitudinal and circular layers of muscularis externa and myenteric plexuses. Highly expressed in Paneth cells, and detected at lower levels in enterocytes (at protein level). Detected in neurons in the brain cortex.

The protein localises to the cell membrane. The protein resides in the cell projection. It localises to the dendrite. It is found in the axon. Its subcellular location is the cytoplasmic vesicle. The protein localises to the membrane. The protein resides in the caveola. It localises to the presynapse. With respect to regulation, G-protein coupled receptor activity is regulated by lipids: oleamide increases HTR2A-mediated activity. Its function is as follows. G-protein coupled receptor for 5-hydroxytryptamine (serotonin). Also functions as a receptor for various drugs and psychoactive substances, including mescaline, psilocybin, 1-(2,5-dimethoxy-4-iodophenyl)-2-aminopropane (DOI) and lysergic acid diethylamide (LSD). Ligand binding causes a conformation change that triggers signaling via guanine nucleotide-binding proteins (G proteins) and modulates the activity of downstream effectors. HTR2A is coupled to G(q)/G(11) G alpha proteins and activates phospholipase C-beta, releasing diacylglycerol (DAG) and inositol 1,4,5-trisphosphate (IP3) second messengers that modulate the activity of phosphatidylinositol 3-kinase and promote the release of Ca(2+) ions from intracellular stores, respectively. Beta-arrestin family members inhibit signaling via G proteins and mediate activation of alternative signaling pathways. Affects neural activity, perception, cognition and mood. Plays a role in the regulation of behavior, including responses to anxiogenic situations and psychoactive substances. Plays a role in intestinal smooth muscle contraction, and may play a role in arterial vasoconstriction. The polypeptide is 5-hydroxytryptamine receptor 2A (Htr2a) (Mus musculus (Mouse)).